The following is a 313-amino-acid chain: Porphobilinogen deaminase (313 aa).

Cysteine 241 is subject to S-(dipyrrolylmethanemethyl)cysteine.

Belongs to the HMBS family. In terms of assembly, monomer. The cofactor is dipyrromethane.

The enzyme catalyses 4 porphobilinogen + H2O = hydroxymethylbilane + 4 NH4(+). Its pathway is porphyrin-containing compound metabolism; protoporphyrin-IX biosynthesis; coproporphyrinogen-III from 5-aminolevulinate: step 2/4. The protein operates within porphyrin-containing compound metabolism; chlorophyll biosynthesis. In terms of biological role, tetrapolymerization of the monopyrrole PBG into the hydroxymethylbilane pre-uroporphyrinogen in several discrete steps. The sequence is that of Porphobilinogen deaminase from Chlorobium phaeobacteroides (strain BS1).